Reading from the N-terminus, the 209-residue chain is dTTP/UTP pyrophosphatase (209 aa).

Asp-88 (proton acceptor) is an active-site residue.

Belongs to the Maf family. YhdE subfamily. It depends on a divalent metal cation as a cofactor.

It is found in the cytoplasm. The catalysed reaction is dTTP + H2O = dTMP + diphosphate + H(+). The enzyme catalyses UTP + H2O = UMP + diphosphate + H(+). Functionally, nucleoside triphosphate pyrophosphatase that hydrolyzes dTTP and UTP. May have a dual role in cell division arrest and in preventing the incorporation of modified nucleotides into cellular nucleic acids. This chain is dTTP/UTP pyrophosphatase, found in Burkholderia mallei (strain ATCC 23344).